A 644-amino-acid chain; its full sequence is Beta-mannosyltransferase 2 (644 aa).

Residues 1-6 (MRTRLN) lie on the Cytoplasmic side of the membrane. Residues 7 to 27 (FLLLCIASVLSVIWIGVLLTW) traverse the membrane as a helical segment. Topologically, residues 28 to 644 (NDNNLGGISL…NDKKDLKIRQ (617 aa)) are extracellular. The N-linked (GlcNAc...) asparagine glycan is linked to asparagine 484. Residues 512 to 644 (TRGEAERRRR…NDKKDLKIRQ (133 aa)) are a coiled coil. A disordered region spans residues 517–644 (ERRRRVAEER…NDKKDLKIRQ (128 aa)).

This sequence belongs to the BMT family.

Its subcellular location is the membrane. Its function is as follows. Beta-mannosyltransferase involved in cell wall biosynthesis. Initiates the beta-mannosylation of core N-linked glycans. The polypeptide is Beta-mannosyltransferase 2 (BMT2) (Komagataella phaffii (strain GS115 / ATCC 20864) (Yeast)).